We begin with the raw amino-acid sequence, 217 residues long: Small ribosomal subunit protein uS3c (217 aa).

Residues 47–118 (IQKHVKSVSN…NLRVTLTGVI (72 aa)) enclose the KH type-2 domain.

Belongs to the universal ribosomal protein uS3 family. Part of the 30S ribosomal subunit.

Its subcellular location is the plastid. The protein resides in the chloroplast. The chain is Small ribosomal subunit protein uS3c (rps3) from Adiantum capillus-veneris (Maidenhair fern).